The following is a 209-amino-acid chain: Orotate phosphoribosyltransferase (209 aa).

5-phospho-alpha-D-ribose 1-diphosphate is bound by residues Arg-98, Lys-102, His-104, and 124 to 132 (EDLISTGKS). Residue Ser-128 coordinates orotate.

Belongs to the purine/pyrimidine phosphoribosyltransferase family. PyrE subfamily. Homodimer. Requires Mg(2+) as cofactor.

It catalyses the reaction orotidine 5'-phosphate + diphosphate = orotate + 5-phospho-alpha-D-ribose 1-diphosphate. It functions in the pathway pyrimidine metabolism; UMP biosynthesis via de novo pathway; UMP from orotate: step 1/2. In terms of biological role, catalyzes the transfer of a ribosyl phosphate group from 5-phosphoribose 1-diphosphate to orotate, leading to the formation of orotidine monophosphate (OMP). The sequence is that of Orotate phosphoribosyltransferase from Malacoplasma penetrans (strain HF-2) (Mycoplasma penetrans).